Reading from the N-terminus, the 450-residue chain is Perilipin-2 (450 aa).

A2 bears the N-acetylalanine mark. Phosphoserine is present on S215. Residue Y232 is modified to Phosphotyrosine. The tract at residues E411–S450 is disordered. Basic residues predominate over residues R423–K433. A compositionally biased stretch (polar residues) spans A440–S450.

The protein belongs to the perilipin family. As to quaternary structure, interacts with IRGC. In terms of processing, acylated; primarily with C14, C16 and C18 fatty acids. Post-translationally, phosphorylation at Tyr-232 by isoform 1 of CHKA (CHKalpha2) promotes dissociation from lipid droplets: dissociation is followed by recruitment of autophagosome machinery to lipid droplets and subsequent lipid droplet lipolysis. Polyubiquitination of Nt-acetylatable A-PLIN2 by MARCHF6 lead to degradation by 26S proteasomes. As to expression, milk lipid globules.

The protein resides in the membrane. The protein localises to the lipid droplet. Its function is as follows. Structural component of lipid droplets, which is required for the formation and maintenance of lipid storage droplets. In Bos taurus (Bovine), this protein is Perilipin-2 (PLIN2).